The sequence spans 61 residues: MAKKALIAKANRKPKFRVRAYTRCSRCGRPRAVFRKFGLCRICFREMAHRGELPGVTKASW.

Positions 24, 27, 40, and 43 each coordinate Zn(2+).

Belongs to the universal ribosomal protein uS14 family. Zinc-binding uS14 subfamily. As to quaternary structure, part of the 30S ribosomal subunit. Contacts proteins S3 and S10. Zn(2+) serves as cofactor.

Functionally, binds 16S rRNA, required for the assembly of 30S particles and may also be responsible for determining the conformation of the 16S rRNA at the A site. This Thermobifida fusca (strain YX) protein is Small ribosomal subunit protein uS14.